We begin with the raw amino-acid sequence, 364 residues long: MVAYALTSMLLSAGALVAAAPSGLDARDGCTFTDAATAIKNKASCSNIVISGMTVPAGTTLDLTGLKSGATVTFQGTTTFGYKEWEGPLISVSGTNIKVVGASGHTIDAAGQKWWDGKGSNGGKTKPKFFYAHSLTTSSISGLNIKNTPVQAFSINGVTGLTLDRITIDNSAGDSAGAHNTDAFDIGSSSGITISNANIKNQDDCVAINSGSDIHVTNCQCSGGHGVSIGSVGGRKDNTVKGVVVSGTTIANSDNGVRIKTISGATGSVSDITYENITLKNIAKYGIVIEQDYLNGGPTGKPTTGVPITGVTLKNVAGSVTGSGTEIYVLCGKGSCSGWNWSGVSITGGKKSSSCLNVPSGASC.

A signal peptide spans 1–21 (MVAYALTSMLLSAGALVAAAP). The propeptide occupies 22–27 (SGLDAR). A disulfide bridge connects residues C30 and C45. 6 PbH1 repeats span residues 158–188 (VTGL…DIGS), 189–210 (SSGI…AINS), 211–231 (GSDI…SIGS), 240–261 (VKGV…RIKT), 269–291 (VSDI…VIEQ), and 303–348 (TTGV…SITG). The active-site Proton donor is the D203. C205 and C221 form a disulfide bridge. The active site involves H225. An N-linked (GlcNAc...) asparagine glycan is attached at N276. C331 and C336 form a disulfide bridge. The N-linked (GlcNAc...) asparagine glycan is linked to N340. A disulfide bridge links C355 with C364.

This sequence belongs to the glycosyl hydrolase 28 family.

Its subcellular location is the secreted. It carries out the reaction (1,4-alpha-D-galacturonosyl)n+m + H2O = (1,4-alpha-D-galacturonosyl)n + (1,4-alpha-D-galacturonosyl)m.. In terms of biological role, involved in maceration and soft-rotting of plant tissue. Hydrolyzes the 1,4-alpha glycosidic bonds of de-esterified pectate in the smooth region of the plant cell wall. The sequence is that of Polygalacturonase (PGN1) from Cochliobolus carbonum (Maize leaf spot fungus).